Consider the following 666-residue polypeptide: ATP-dependent RNA helicase DDX51 (666 aa).

At A2 the chain carries N-acetylalanine. A disordered region spans residues Y9 to E152. Over residues P10–H28 the composition is skewed to low complexity. Over residues A33–Q48 the composition is skewed to basic and acidic residues. Positions R49–A58 are enriched in low complexity. Residues R65–R75 show a composition bias toward basic residues. Phosphoserine is present on residues S83 and S103. Acidic residues predominate over residues E97 to P108. The short motif at Y221–I229 is the Q motif element. One can recognise a Helicase ATP-binding domain in the interval G243 to F452. Residue A256–T263 coordinates ATP. The DEAD box motif lies at D371–D374. The Helicase C-terminal domain maps to V494–Q640.

It belongs to the DEAD box helicase family. DDX51/DBP6 subfamily.

The protein localises to the nucleus. The protein resides in the nucleolus. The catalysed reaction is ATP + H2O = ADP + phosphate + H(+). Its function is as follows. ATP-binding RNA helicase involved in the biogenesis of 60S ribosomal subunits. The chain is ATP-dependent RNA helicase DDX51 (DDX51) from Homo sapiens (Human).